The following is a 436-amino-acid chain: UDP-N-acetylmuramate--L-alanine ligase (436 aa).

108–114 (GAHGKTS) contacts ATP.

The protein belongs to the MurCDEF family.

It localises to the cytoplasm. The enzyme catalyses UDP-N-acetyl-alpha-D-muramate + L-alanine + ATP = UDP-N-acetyl-alpha-D-muramoyl-L-alanine + ADP + phosphate + H(+). It participates in cell wall biogenesis; peptidoglycan biosynthesis. Functionally, cell wall formation. This is UDP-N-acetylmuramate--L-alanine ligase from Bacillus cereus (strain Q1).